The chain runs to 185 residues: Homeobox expressed in ES cells 1 (185 aa).

The homeobox DNA-binding region spans 108 to 167 (GRRPRTAFTQNQIEVLENVFRVNCYPGIDIREDLAQKLNLEEDRIQIWFQNRRAKLKRSH).

It belongs to the ANF homeobox family. As to quaternary structure, can form heterodimers with PROP1 in binding to DNA. Interacts with TLE1.

It localises to the nucleus. Its function is as follows. Required for the normal development of the forebrain, eyes and other anterior structures such as the olfactory placodes and pituitary gland. Possible transcriptional repressor. Binds to the palindromic PIII sequence, 5'-AGCTTGAGTCTAATTGAATTAACTGTAC-3'. HESX1 and PROP1 bind as heterodimers on this palindromic site, and, in vitro, HESX1 can antagonize PROP1 activation. In Pan troglodytes (Chimpanzee), this protein is Homeobox expressed in ES cells 1 (HESX1).